The following is a 459-amino-acid chain: Sorting nexin-8 (459 aa).

The tract at residues 1-37 (MTGRAMDPLPSPAVAAAAEAEADEEADPPATGPRTSQ) is disordered. A PX domain is found at 68-176 (AKDTVQVELI…KLFLSFSGSD (109 aa)). Residues Arg104, Lys130, and Arg143 each coordinate a 1,2-diacyl-sn-glycero-3-phospho-(1D-myo-inositol-3-phosphate). Thr446 carries the phosphothreonine modification. A Phosphoserine modification is found at Ser450.

It belongs to the sorting nexin family.

Its subcellular location is the early endosome membrane. Functionally, may be involved in several stages of intracellular trafficking. May play a role in intracellular protein transport from early endosomes to the trans-Golgi network. In Mus musculus (Mouse), this protein is Sorting nexin-8 (Snx8).